Here is a 529-residue protein sequence, read N- to C-terminus: Corneodesmosin (529 aa).

The first 32 residues, 1-32 (MGSSRAPWMGRVGGHGMMALLLAGLLLPGTLA), serve as a signal peptide directing secretion. Disordered stretches follow at residues 38–248 (FSDP…SVSG) and 383–492 (GSTG…SSAG). Composition is skewed to low complexity over residues 58–83 (GKGDSSGFSSYSGSSSSGSSISSARS), 90–100 (GSSSGSSIAQG), 111–175 (GYSQ…NGSA), 189–231 (PSQP…SGGP), 392–408 (SPSSSRVPSSSSISSSS), and 426–441 (PGTGSFSSSSSSQSSG). Asn172 carries N-linked (GlcNAc...) asparagine glycosylation. A compositionally biased stretch (polar residues) spans 449-467 (GSKSSSSGHPCMSVSSLTL).

Its subcellular location is the secreted. In terms of biological role, important for the epidermal barrier integrity. In Pan troglodytes (Chimpanzee), this protein is Corneodesmosin (CDSN).